We begin with the raw amino-acid sequence, 403 residues long: GPI-N-acetylgalactosamine transferase PGAP4 (403 aa).

The Cytoplasmic portion of the chain corresponds to 1-22; that stretch reads MSTSTSPAAMLLRRLRRLSWGS. Residues 23–43 traverse the membrane as a helical segment; that stretch reads TAVQLFILTVVTFGLLAPLAC. Over 44–259 the chain is Lumenal; sequence HRLLHSYFYL…RLQHYINPEP (216 aa). Residue N87 is glycosylated (N-linked (GalNAc...) asparagine). V109 lines the UDP-N-acetyl-alpha-D-galactosamine pocket. Cystine bridges form between C132–C136 and C144–C194. The DXD motif motif lies at 211–213; sequence EDD. Residues 260–280 form a helical membrane-spanning segment; it reads MRILEWVGVGMLLGPLLTWIY. The Cytoplasmic portion of the chain corresponds to 281–287; it reads MRFASRP. A helical transmembrane segment spans residues 288–308; that stretch reads GFSWPVMLFFSLYSMGLVELV. Residues 309-403 are Lumenal-facing; sequence GRHYFLELRR…LRYNFHPSLL (95 aa). A disulfide bridge links C332 with C333. Residues T334, P335, and K362 each coordinate UDP-N-acetyl-alpha-D-galactosamine.

This sequence belongs to the PGAP4 family. In terms of processing, glycosylated.

It localises to the golgi apparatus membrane. Its function is as follows. Golgi-resident glycosylphosphatidylinositol (GPI)-N-acetylgalactosamine transferase that catalyzes the N-acetyl-beta-D-galactosamine transfer from an UDP-N-acetyl-alpha-D-galactosamine to the 4-OH-position of the first mannose of the glycosylphosphatidylinositol (GPI) of a GPI-anchored protein (GPI-AP). This modification occurs after the fatty acid remodeling step of the GPI-anchor maturation. This chain is GPI-N-acetylgalactosamine transferase PGAP4, found in Homo sapiens (Human).